The chain runs to 189 residues: Phosphoheptose isomerase (189 aa).

The 156-residue stretch at 34-189 folds into the SIS domain; the sequence is LVAALKGGKK…CDLVEKGLFK (156 aa). 49–51 contributes to the substrate binding site; it reads NGG. H58 and E62 together coordinate Zn(2+). Substrate is bound by residues E62, 91–92, 117–119, S122, and Q169; these read ND and STS. Residues Q169 and H177 each contribute to the Zn(2+) site.

This sequence belongs to the SIS family. GmhA subfamily. In terms of assembly, homotetramer. The cofactor is Zn(2+).

Its subcellular location is the cytoplasm. The enzyme catalyses 2 D-sedoheptulose 7-phosphate = D-glycero-alpha-D-manno-heptose 7-phosphate + D-glycero-beta-D-manno-heptose 7-phosphate. Its pathway is carbohydrate biosynthesis; D-glycero-D-manno-heptose 7-phosphate biosynthesis; D-glycero-alpha-D-manno-heptose 7-phosphate and D-glycero-beta-D-manno-heptose 7-phosphate from sedoheptulose 7-phosphate: step 1/1. Catalyzes the isomerization of sedoheptulose 7-phosphate in D-glycero-D-manno-heptose 7-phosphate. The protein is Phosphoheptose isomerase of Geobacter metallireducens (strain ATCC 53774 / DSM 7210 / GS-15).